Here is a 186-residue protein sequence, read N- to C-terminus: Threonylcarbamoyl-AMP synthase (186 aa).

The YrdC-like domain maps to 1-186 (MADTWEAAHS…LNNQVFRDDA (186 aa)).

It belongs to the SUA5 family. TsaC subfamily.

The protein localises to the cytoplasm. It carries out the reaction L-threonine + hydrogencarbonate + ATP = L-threonylcarbamoyladenylate + diphosphate + H2O. Its function is as follows. Required for the formation of a threonylcarbamoyl group on adenosine at position 37 (t(6)A37) in tRNAs that read codons beginning with adenine. Catalyzes the conversion of L-threonine, HCO(3)(-)/CO(2) and ATP to give threonylcarbamoyl-AMP (TC-AMP) as the acyladenylate intermediate, with the release of diphosphate. The chain is Threonylcarbamoyl-AMP synthase from Idiomarina loihiensis (strain ATCC BAA-735 / DSM 15497 / L2-TR).